A 359-amino-acid chain; its full sequence is 3-dehydroquinate synthase (359 aa).

Residues 70-75 (DGEQYK), 105-109 (GVIGD), 129-130 (TT), Lys142, Lys151, and 169-172 (FYKT) contribute to the NAD(+) site. 3 residues coordinate Zn(2+): Glu184, His247, and His264.

This sequence belongs to the sugar phosphate cyclases superfamily. Dehydroquinate synthase family. It depends on Co(2+) as a cofactor. The cofactor is Zn(2+). Requires NAD(+) as cofactor.

It localises to the cytoplasm. It catalyses the reaction 7-phospho-2-dehydro-3-deoxy-D-arabino-heptonate = 3-dehydroquinate + phosphate. It functions in the pathway metabolic intermediate biosynthesis; chorismate biosynthesis; chorismate from D-erythrose 4-phosphate and phosphoenolpyruvate: step 2/7. In terms of biological role, catalyzes the conversion of 3-deoxy-D-arabino-heptulosonate 7-phosphate (DAHP) to dehydroquinate (DHQ). The protein is 3-dehydroquinate synthase of Francisella tularensis subsp. tularensis (strain FSC 198).